A 36-amino-acid polypeptide reads, in one-letter code: Neuropeptide F (36 aa).

F36 is subject to Phenylalanine amide.

This sequence belongs to the NPY family. As to expression, central and peripheral nervous system, and muscular pharynx.

The protein resides in the secreted. May perform an important neurotransmitter function and may regulate muscular activity. This Arthurdendyus triangulatus (New Zealand flatworm) protein is Neuropeptide F.